A 165-amino-acid chain; its full sequence is Thiol peroxidase (165 aa).

Positions 18-164 (RKVGDKAPNF…YEAAIEAAKK (147 aa)) constitute a Thioredoxin domain. Catalysis depends on Cys-60, which acts as the Cysteine sulfenic acid (-SOH) intermediate. A disulfide bond links Cys-60 and Cys-94.

It belongs to the peroxiredoxin family. Tpx subfamily. In terms of assembly, homodimer.

The catalysed reaction is a hydroperoxide + [thioredoxin]-dithiol = an alcohol + [thioredoxin]-disulfide + H2O. In terms of biological role, thiol-specific peroxidase that catalyzes the reduction of hydrogen peroxide and organic hydroperoxides to water and alcohols, respectively. Plays a role in cell protection against oxidative stress by detoxifying peroxides. This is Thiol peroxidase from Listeria monocytogenes serovar 1/2a (strain ATCC BAA-679 / EGD-e).